The primary structure comprises 135 residues: Race-specific elicitor A4 (135 aa).

A signal peptide spans 1-18 (MHYTTLLLSTLLVGTALA). Residues 19-29 (QPTNPPAKTPK) constitute a propeptide that is removed on maturation. The disordered stretch occupies residues 19 to 39 (QPTNPPAKTPKKAPKTQPYNP). In terms of domain architecture, Chitin-binding type-2 spans 47–111 (DTKCMGPKDC…DYPNLSTCPV (65 aa)). Cysteine 86 and cysteine 101 are disulfide-bonded. Residues 112 to 135 (KTPQPKPKKGGVGGKKASVGHPGY) are disordered.

This necrosis-inducing peptide induces a hypersensitive response on Cf-4 tomato genotypes. Race-specific elicitors are compounds which only induce defense responses in genotypes of host plants which are resistant to the pathogenic race that produces the elicitor, but not in susceptible genotypes. The protein is Race-specific elicitor A4 (AVR4) of Passalora fulva (Tomato leaf mold).